A 141-amino-acid chain; its full sequence is Sigma factor binding protein 2, chloroplastic (141 aa).

The span at 1–20 (MDQSSSTLLINQRKSSSSPT) shows a compositional bias: polar residues. The disordered stretch occupies residues 1–36 (MDQSSSTLLINQRKSSSSPTRIPPKQKRKSTTTHKP). A chloroplast-targeting transit peptide spans 1-38 (MDQSSSTLLINQRKSSSSPTRIPPKQKRKSTTTHKPIK). A Bipartite nuclear localization signal motif is present at residues 13–29 (RKSSSSPTRIPPKQKRK). Basic residues predominate over residues 24–36 (PKQKRKSTTTHKP). The VQ signature appears at 55–64 (FRELVQELTG).

In terms of assembly, interacts with sigma factors in chloroplast. Interacts with WRKY33 in the nucleus.

Its subcellular location is the plastid. It is found in the chloroplast. It localises to the nucleus. Functions as activator of WRKY33 in plant defense against necrotrophic pathogens by stimulating the DNA-binding activity of WRKY33. This Arabidopsis thaliana (Mouse-ear cress) protein is Sigma factor binding protein 2, chloroplastic (SIB2).